Here is a 73-residue protein sequence, read N- to C-terminus: YFSYNDKIIKILEAEYLNADHHFTAGTVISDKLEIACGSGILRVKKLQQESKKALNIEEFLRGTNILKDTVLK.

It belongs to the Fmt family.

The catalysed reaction is L-methionyl-tRNA(fMet) + (6R)-10-formyltetrahydrofolate = N-formyl-L-methionyl-tRNA(fMet) + (6S)-5,6,7,8-tetrahydrofolate + H(+). Functionally, attaches a formyl group to the free amino group of methionyl-tRNA(fMet). The formyl group appears to play a dual role in the initiator identity of N-formylmethionyl-tRNA by promoting its recognition by IF2 and preventing the misappropriation of this tRNA by the elongation apparatus. The chain is Methionyl-tRNA formyltransferase (fmt) from Rickettsia amblyommatis (Rickettsia amblyommii).